The sequence spans 325 residues: 6-phosphogluconolactonase 3, chloroplastic (325 aa).

The transit peptide at 1–68 directs the protein to the chloroplast; that stretch reads MASSSCFLRS…KSSDTRRKVK (68 aa). Residues 51 to 73 are disordered; that stretch reads SIGTGSTKKSSDTRRKVKSMATT. A Microbody targeting signal motif is present at residues 323-325; sequence SKL.

Belongs to the glucosamine/galactosamine-6-phosphate isomerase family. 6-phosphogluconolactonase subfamily. As to quaternary structure, interacts with TRXM2. Expressed in roots, leaves and shoots.

Its subcellular location is the plastid. The protein localises to the chloroplast. It localises to the peroxisome. The catalysed reaction is 6-phospho-D-glucono-1,5-lactone + H2O = 6-phospho-D-gluconate + H(+). The protein operates within carbohydrate degradation; pentose phosphate pathway; D-ribulose 5-phosphate from D-glucose 6-phosphate (oxidative stage): step 2/3. Functionally, catalyzes the hydrolysis of 6-phosphogluconolactone to 6-phosphogluconate. Involved in the regulation of cellular redox state; enzymatic activity is required for this function. Required for sugar-dependent expression of nitrate assimilation genes in the nucleus of root cells. The chain is 6-phosphogluconolactonase 3, chloroplastic from Arabidopsis thaliana (Mouse-ear cress).